Reading from the N-terminus, the 674-residue chain is DNA ligase (674 aa).

NAD(+) contacts are provided by residues 42-46 (DNVYD), 91-92 (SM), and glutamate 121. Lysine 123 acts as the N6-AMP-lysine intermediate in catalysis. Arginine 144, glutamate 178, lysine 294, and lysine 318 together coordinate NAD(+). Zn(2+) contacts are provided by cysteine 412, cysteine 415, cysteine 430, and cysteine 435. The BRCT domain occupies 596-674 (VKDSFVAGKT…ETELLANLKD (79 aa)).

The protein belongs to the NAD-dependent DNA ligase family. LigA subfamily. Requires Mg(2+) as cofactor. Mn(2+) serves as cofactor.

The catalysed reaction is NAD(+) + (deoxyribonucleotide)n-3'-hydroxyl + 5'-phospho-(deoxyribonucleotide)m = (deoxyribonucleotide)n+m + AMP + beta-nicotinamide D-nucleotide.. Its function is as follows. DNA ligase that catalyzes the formation of phosphodiester linkages between 5'-phosphoryl and 3'-hydroxyl groups in double-stranded DNA using NAD as a coenzyme and as the energy source for the reaction. It is essential for DNA replication and repair of damaged DNA. The polypeptide is DNA ligase (Lacticaseibacillus casei (strain BL23) (Lactobacillus casei)).